The following is a 175-amino-acid chain: ATP synthase subunit b (175 aa).

Residues 23 to 43 form a helical membrane-spanning segment; sequence TGITFLVLLFVLGKFAWGPIV.

Belongs to the ATPase B chain family. F-type ATPases have 2 components, F(1) - the catalytic core - and F(0) - the membrane proton channel. F(1) has five subunits: alpha(3), beta(3), gamma(1), delta(1), epsilon(1). F(0) has three main subunits: a(1), b(2) and c(10-14). The alpha and beta chains form an alternating ring which encloses part of the gamma chain. F(1) is attached to F(0) by a central stalk formed by the gamma and epsilon chains, while a peripheral stalk is formed by the delta and b chains.

It is found in the cell inner membrane. Functionally, f(1)F(0) ATP synthase produces ATP from ADP in the presence of a proton or sodium gradient. F-type ATPases consist of two structural domains, F(1) containing the extramembraneous catalytic core and F(0) containing the membrane proton channel, linked together by a central stalk and a peripheral stalk. During catalysis, ATP synthesis in the catalytic domain of F(1) is coupled via a rotary mechanism of the central stalk subunits to proton translocation. Component of the F(0) channel, it forms part of the peripheral stalk, linking F(1) to F(0). The sequence is that of ATP synthase subunit b from Anaeromyxobacter sp. (strain Fw109-5).